Consider the following 417-residue polypeptide: UDP-N-acetylglucosamine 1-carboxyvinyltransferase (417 aa).

A phosphoenolpyruvate-binding site is contributed by 22 to 23; the sequence is KN. Position 92 (R92) interacts with UDP-N-acetyl-alpha-D-glucosamine. The Proton donor role is filled by C116. Residue C116 is modified to 2-(S-cysteinyl)pyruvic acid O-phosphothioketal. UDP-N-acetyl-alpha-D-glucosamine contacts are provided by D304 and I326.

It belongs to the EPSP synthase family. MurA subfamily.

Its subcellular location is the cytoplasm. The enzyme catalyses phosphoenolpyruvate + UDP-N-acetyl-alpha-D-glucosamine = UDP-N-acetyl-3-O-(1-carboxyvinyl)-alpha-D-glucosamine + phosphate. It participates in cell wall biogenesis; peptidoglycan biosynthesis. Its function is as follows. Cell wall formation. Adds enolpyruvyl to UDP-N-acetylglucosamine. The protein is UDP-N-acetylglucosamine 1-carboxyvinyltransferase of Geotalea daltonii (strain DSM 22248 / JCM 15807 / FRC-32) (Geobacter daltonii).